We begin with the raw amino-acid sequence, 387 residues long: Xylose isomerase (387 aa).

Active-site residues include histidine 53 and aspartate 56. The Mg(2+) site is built by glutamate 180, glutamate 216, histidine 219, aspartate 244, aspartate 254, aspartate 256, and aspartate 286.

Belongs to the xylose isomerase family. In terms of assembly, homotetramer. Mg(2+) serves as cofactor.

It localises to the cytoplasm. It catalyses the reaction alpha-D-xylose = alpha-D-xylulofuranose. In Thermus caldophilus, this protein is Xylose isomerase (xylA).